The following is a 305-amino-acid chain: MNIRDLEYLVALAEHRHFRRAADSCHVSQPTLSGQIRKLEDELGVMLLERTSRKVLFTQAGMLLVDQARTVLREVKVLKEMASQQGETMSGPLHIGLIPTVGPYLLPHIIPMLHQTFPKLEMYLHEAQTHQLLAQLDSGKLDCVILALVKESEAFIEVPLFDEPMLLAIYEDHPWANRECVPMADLAGEKLLMLEDGHCLRDQAMGFCFEAGADEDTHFRATSLETLRNMVAAGSGITLLPALAVPPERKRDGVVYLPCIKPEPRRTIGLVYRPGSPLRSRYEQLAEAIRARMDGHFDKVLKQAV.

Residues 1 to 58 (MNIRDLEYLVALAEHRHFRRAADSCHVSQPTLSGQIRKLEDELGVMLLERTSRKVLFT) form the HTH lysR-type domain. Residues 18–37 (FRRAADSCHVSQPTLSGQIR) constitute a DNA-binding region (H-T-H motif). 2 disulfide bridges follow: C180/C259 and C199/C208. C199 is subject to Cysteine sulfenic acid (-SOH); alternate. Position 199 is an S-glutathionyl cysteine; alternate (C199). C199 bears the S-nitrosocysteine; alternate mark.

The protein belongs to the LysR transcriptional regulatory family. As to quaternary structure, homodimer and homotetramer. Oxidized on Cys-199; the Cys-SOH formed in response to oxidative signaling triggers a conformational change and the onset of transcriptional activity with a specific DNA-binding affinity. Cys-199-SOH rapidly reacts with Cys-208-SH to form a disulfide bond. In terms of processing, S-nitrosylation in response to nitrosative signaling triggers a conformational change and the onset of transcriptional activity with a specific DNA-binding affinity. Post-translationally, glutathionylation in response to redox signaling triggers the onset of transcriptional activity with a specific DNA-binding affinity.

Activated by oxidation of Cys-199 resulting in the alternative formation of cystine, sulfenic acid, S-nitroso- or glutathione-bound cysteine. Hydrogen peroxide sensor. Activates the expression of a regulon of hydrogen peroxide-inducible genes such as katG, gor, ahpC, ahpF, oxyS (a regulatory RNA), dps, fur and grxA. OxyR expression is negatively autoregulated by binding to a 43 bp region upstream of its own coding sequence. OxyR is inactivated by reduction of its essential disulfide bond by the product of GrxA, itself positively regulated by OxyR. Also has a positive regulatory effect on the production of surface proteins that control the colony morphology and auto-aggregation ability. The chain is Hydrogen peroxide-inducible genes activator (oxyR) from Escherichia coli O157:H7.